We begin with the raw amino-acid sequence, 221 residues long: 7-cyano-7-deazaguanine synthase (221 aa).

ATP is bound at residue 10 to 20 (LSGGLDSTTCM). Positions 188, 196, 199, and 202 each coordinate Zn(2+).

This sequence belongs to the QueC family. Homodimer. Zn(2+) serves as cofactor.

The catalysed reaction is 7-carboxy-7-deazaguanine + NH4(+) + ATP = 7-cyano-7-deazaguanine + ADP + phosphate + H2O + H(+). The protein operates within purine metabolism; 7-cyano-7-deazaguanine biosynthesis. Functionally, catalyzes the ATP-dependent conversion of 7-carboxy-7-deazaguanine (CDG) to 7-cyano-7-deazaguanine (preQ(0)). This chain is 7-cyano-7-deazaguanine synthase, found in Oceanobacillus iheyensis (strain DSM 14371 / CIP 107618 / JCM 11309 / KCTC 3954 / HTE831).